The chain runs to 538 residues: CTP synthase (538 aa).

Residues 1-266 (MKTKFIFVTG…DDQVVDKLNI (266 aa)) are amidoligase domain. Position 14 (Ser14) interacts with CTP. Ser14 contributes to the UTP binding site. ATP-binding positions include 15 to 20 (SIGKGL) and Asp72. Mg(2+) is bound by residues Asp72 and Glu140. Residues 147-149 (DIE), 187-192 (KTKPTQ), and Lys223 each bind CTP. UTP-binding positions include 187-192 (KTKPTQ) and Lys223. The Glutamine amidotransferase type-1 domain occupies 292 to 534 (HIAIVGKYVN…IAAALEHRGK (243 aa)). Gly354 provides a ligand contact to L-glutamine. Cys381 serves as the catalytic Nucleophile; for glutamine hydrolysis. Residues 382 to 385 (LGMQ), Glu405, and Arg462 each bind L-glutamine. Active-site residues include His507 and Glu509.

It belongs to the CTP synthase family. In terms of assembly, homotetramer.

It carries out the reaction UTP + L-glutamine + ATP + H2O = CTP + L-glutamate + ADP + phosphate + 2 H(+). The enzyme catalyses L-glutamine + H2O = L-glutamate + NH4(+). It catalyses the reaction UTP + NH4(+) + ATP = CTP + ADP + phosphate + 2 H(+). Its pathway is pyrimidine metabolism; CTP biosynthesis via de novo pathway; CTP from UDP: step 2/2. Allosterically activated by GTP, when glutamine is the substrate; GTP has no effect on the reaction when ammonia is the substrate. The allosteric effector GTP functions by stabilizing the protein conformation that binds the tetrahedral intermediate(s) formed during glutamine hydrolysis. Inhibited by the product CTP, via allosteric rather than competitive inhibition. Its function is as follows. Catalyzes the ATP-dependent amination of UTP to CTP with either L-glutamine or ammonia as the source of nitrogen. Regulates intracellular CTP levels through interactions with the four ribonucleotide triphosphates. This is CTP synthase from Geobacter metallireducens (strain ATCC 53774 / DSM 7210 / GS-15).